A 152-amino-acid polypeptide reads, in one-letter code: Transcriptional regulator MraZ (152 aa).

2 SpoVT-AbrB domains span residues 5-52 and 81-124; these read ATTL…PLPE and ADDC…NEDA.

Belongs to the MraZ family. In terms of assembly, forms oligomers.

Its subcellular location is the cytoplasm. It is found in the nucleoid. This Idiomarina loihiensis (strain ATCC BAA-735 / DSM 15497 / L2-TR) protein is Transcriptional regulator MraZ.